Consider the following 78-residue polypeptide: Acyl carrier protein (78 aa).

Positions 2–77 (SDILERVRKI…DAVKFITEKT (76 aa)) constitute a Carrier domain. Residue Ser37 is modified to O-(pantetheine 4'-phosphoryl)serine.

It belongs to the acyl carrier protein (ACP) family. 4'-phosphopantetheine is transferred from CoA to a specific serine of apo-ACP by AcpS. This modification is essential for activity because fatty acids are bound in thioester linkage to the sulfhydryl of the prosthetic group.

It localises to the cytoplasm. It functions in the pathway lipid metabolism; fatty acid biosynthesis. Functionally, carrier of the growing fatty acid chain in fatty acid biosynthesis. The chain is Acyl carrier protein from Caulobacter vibrioides (strain ATCC 19089 / CIP 103742 / CB 15) (Caulobacter crescentus).